The sequence spans 118 residues: Large ribosomal subunit protein bL20 (118 aa).

This sequence belongs to the bacterial ribosomal protein bL20 family.

Binds directly to 23S ribosomal RNA and is necessary for the in vitro assembly process of the 50S ribosomal subunit. It is not involved in the protein synthesizing functions of that subunit. The sequence is that of Large ribosomal subunit protein bL20 from Staphylococcus haemolyticus (strain JCSC1435).